Here is a 557-residue protein sequence, read N- to C-terminus: Potassium-transporting ATPase potassium-binding subunit (557 aa).

10 helical membrane-spanning segments follow: residues 1 to 21 (MEIL…IPIG), 62 to 82 (QYIF…YIIL), 132 to 152 (IVIT…ALAF), 176 to 196 (ILLP…VPQT), 253 to 273 (VQII…GHMI), 279 to 299 (AVAI…ICFS), 371 to 391 (IFGG…LTVF), 415 to 435 (LVAF…ALAL), 482 to 502 (VSAG…LLAV), and 528 to 548 (VTLI…AVAL).

The protein belongs to the KdpA family. As to quaternary structure, the system is composed of three essential subunits: KdpA, KdpB and KdpC.

Its subcellular location is the cell membrane. Its function is as follows. Part of the high-affinity ATP-driven potassium transport (or Kdp) system, which catalyzes the hydrolysis of ATP coupled with the electrogenic transport of potassium into the cytoplasm. This subunit binds the extracellular potassium ions and delivers the ions to the membrane domain of KdpB through an intramembrane tunnel. The polypeptide is Potassium-transporting ATPase potassium-binding subunit (Clostridium acetobutylicum (strain ATCC 824 / DSM 792 / JCM 1419 / IAM 19013 / LMG 5710 / NBRC 13948 / NRRL B-527 / VKM B-1787 / 2291 / W)).